We begin with the raw amino-acid sequence, 223 residues long: Large ribosomal subunit protein uL4c (223 aa).

Residues 61–96 form a disordered region; the sequence is TKTRSEVEGGGKKPWKQKGTGNARAGSSNSPLWKGG.

This sequence belongs to the universal ribosomal protein uL4 family. In terms of assembly, part of the 50S ribosomal subunit.

Its subcellular location is the plastid. The protein resides in the chloroplast. Its function is as follows. Probably binds the 23S rRNA. The chain is Large ribosomal subunit protein uL4c (rpl4) from Guillardia theta (Cryptophyte).